We begin with the raw amino-acid sequence, 565 residues long: NAD-dependent malic enzyme (565 aa).

Tyr104 functions as the Proton donor in the catalytic mechanism. Residue Arg157 participates in NAD(+) binding. The Proton acceptor role is filled by Lys175. A divalent metal cation-binding residues include Glu246, Asp247, and Asp270. NAD(+) contacts are provided by Asp270 and Asn418.

Belongs to the malic enzymes family. As to quaternary structure, homotetramer. Requires Mg(2+) as cofactor. It depends on Mn(2+) as a cofactor.

The enzyme catalyses (S)-malate + NAD(+) = pyruvate + CO2 + NADH. The catalysed reaction is oxaloacetate + H(+) = pyruvate + CO2. The chain is NAD-dependent malic enzyme from Salmonella newport (strain SL254).